A 125-amino-acid chain; its full sequence is uncharacterized protein (125 aa).

The disordered stretch occupies residues 50–73 (QTSDFSDESSRSDSSSVTNENEVS).

This is an uncharacterized protein from Microplitis demolitor (Parasitoid wasp).